The chain runs to 469 residues: MTTKTRFAPSPTGFLHVGGARTALYSWLQARANNGEFVLRIEDTDIERSTQAACDAILEGMNWLGLTWDEGPYYQTKRFDRYNEIIAQMLEQGTAYKCYCSRERIDALREAQAANGEAQKYDGCCRDLPARDTDEPFVVRFKNPIGGSVVFDDHVRGRIEFSNDALDDLIIARTDGVPTYNFCVVVDDWDMGITCVVRGEDHINNTPRQINILKALGAPIPEYAHVSMILGDDGAKLSKRHGAVSVMQYRDDGYLPEALLNYLVRLGWSHGDQEVFSLEEMKQLFKLDDINKAPSAFNTEKLVWLNQHYIKTLDPEYVASHLQWHMDDQKIDTSNGPALSAVVTALAERAKTLKELAASSRYFYEDFAEFDAEQAKKHLRGVALEPLQLVQQKLAALTEWTVEAIHQAIEATATELEVGMGKVGMPLRVAVTGAGQSPGLDITLFLIGKVRSEQRISKAIEFVADRINS.

The 'HIGH' region motif lies at 9 to 19; sequence PSPTGFLHVGG. Residues Cys-98, Cys-100, Cys-125, and Asp-127 each contribute to the Zn(2+) site. The 'KMSKS' region motif lies at 236–240; sequence KLSKR. Position 239 (Lys-239) interacts with ATP.

It belongs to the class-I aminoacyl-tRNA synthetase family. Glutamate--tRNA ligase type 1 subfamily. In terms of assembly, monomer. Zn(2+) serves as cofactor.

It is found in the cytoplasm. It catalyses the reaction tRNA(Glu) + L-glutamate + ATP = L-glutamyl-tRNA(Glu) + AMP + diphosphate. In terms of biological role, catalyzes the attachment of glutamate to tRNA(Glu) in a two-step reaction: glutamate is first activated by ATP to form Glu-AMP and then transferred to the acceptor end of tRNA(Glu). This Shewanella sp. (strain MR-4) protein is Glutamate--tRNA ligase.